Consider the following 248-residue polypeptide: MKRMEANKIKLINEDNLRLDGRSFNELRPIKIQAGVLNRADGSAYIEWGGNKIMVGVYGPKEAYPKHSQDIDHAIVKARYNMAAFSVDERKRPGPDRRTMEISKVISEALSSSIMIEQFPRAEIDVYIEVLQADAGTRIAGLTAATVALADAGVPMRDMVVGCTAGKVDGHMVLDLSKEEDNYGEADIPIAIMPKTGDIVLMQMDGDVTEDELYQAMDMIFEATKRISQIQREALLNKYKIQDIGEGE.

This sequence belongs to the RNase PH family. Rrp41 subfamily. In terms of assembly, component of the archaeal exosome complex. Forms a hexameric ring-like arrangement composed of 3 Rrp41-Rrp42 heterodimers. The hexameric ring associates with a trimer of Rrp4 and/or Csl4 subunits.

The protein resides in the cytoplasm. In terms of biological role, catalytic component of the exosome, which is a complex involved in RNA degradation. Has 3'-&gt;5' exoribonuclease activity. Can also synthesize heteromeric RNA-tails. The sequence is that of Exosome complex component Rrp41 from Thermoplasma acidophilum (strain ATCC 25905 / DSM 1728 / JCM 9062 / NBRC 15155 / AMRC-C165).